Here is a 159-residue protein sequence, read N- to C-terminus: 2-C-methyl-D-erythritol 2,4-cyclodiphosphate synthase (159 aa).

A divalent metal cation-binding residues include Asp-8 and His-10. 4-CDP-2-C-methyl-D-erythritol 2-phosphate is bound by residues 8-10 and 34-35; these read DVH and HS. His-42 is an a divalent metal cation binding site. 4-CDP-2-C-methyl-D-erythritol 2-phosphate contacts are provided by residues 56-58, 61-65, 100-106, 132-135, Phe-139, and Arg-142; these read DIG, FPDTD, AQAPKML, and TTTE.

It belongs to the IspF family. Homotrimer. A divalent metal cation serves as cofactor.

It carries out the reaction 4-CDP-2-C-methyl-D-erythritol 2-phosphate = 2-C-methyl-D-erythritol 2,4-cyclic diphosphate + CMP. It participates in isoprenoid biosynthesis; isopentenyl diphosphate biosynthesis via DXP pathway; isopentenyl diphosphate from 1-deoxy-D-xylulose 5-phosphate: step 4/6. Its function is as follows. Involved in the biosynthesis of isopentenyl diphosphate (IPP) and dimethylallyl diphosphate (DMAPP), two major building blocks of isoprenoid compounds. Catalyzes the conversion of 4-diphosphocytidyl-2-C-methyl-D-erythritol 2-phosphate (CDP-ME2P) to 2-C-methyl-D-erythritol 2,4-cyclodiphosphate (ME-CPP) with a corresponding release of cytidine 5-monophosphate (CMP). The polypeptide is 2-C-methyl-D-erythritol 2,4-cyclodiphosphate synthase (Salmonella arizonae (strain ATCC BAA-731 / CDC346-86 / RSK2980)).